Here is a 209-residue protein sequence, read N- to C-terminus: Large ribosomal subunit protein uL3 (209 aa).

The segment at 130 to 154 (RGPMSHGSKFHRAVGSMGASSDPSR) is disordered.

The protein belongs to the universal ribosomal protein uL3 family. Part of the 50S ribosomal subunit. Forms a cluster with proteins L14 and L19.

Its function is as follows. One of the primary rRNA binding proteins, it binds directly near the 3'-end of the 23S rRNA, where it nucleates assembly of the 50S subunit. This is Large ribosomal subunit protein uL3 from Clostridium kluyveri (strain NBRC 12016).